Reading from the N-terminus, the 680-residue chain is Methionine--tRNA ligase (680 aa).

The 'HIGH' region signature appears at 15–25 (PYANGPVHIGH). Zn(2+) is bound by residues Cys147, Cys150, Cys160, and Cys163. Residues 332-336 (KISTS) carry the 'KMSKS' region motif. Thr335 is a binding site for ATP. Residues 579 to 680 (DFLKLDIRVG…AEVAAGSQVK (102 aa)) form the tRNA-binding domain.

The protein belongs to the class-I aminoacyl-tRNA synthetase family. MetG type 1 subfamily. As to quaternary structure, homodimer. Zn(2+) serves as cofactor.

It is found in the cytoplasm. It carries out the reaction tRNA(Met) + L-methionine + ATP = L-methionyl-tRNA(Met) + AMP + diphosphate. Its function is as follows. Is required not only for elongation of protein synthesis but also for the initiation of all mRNA translation through initiator tRNA(fMet) aminoacylation. This Porphyromonas gingivalis (strain ATCC BAA-308 / W83) protein is Methionine--tRNA ligase.